Here is a 1573-residue protein sequence, read N- to C-terminus: Pentafunctional AROM polypeptide 1 (1573 aa).

Residues 1–380 are 3-dehydroquinate synthase; that stretch reads MAEPTKISIL…YEPKASVVSN (380 aa). NAD(+)-binding positions include 44–46, 81–84, 112–114, and D117; these read DTN, ENSK, and GGV. R128 is a binding site for 7-phospho-2-dehydro-3-deoxy-D-arabino-heptonate. An NAD(+)-binding site is contributed by 137-138; it reads TT. D144 and K150 together coordinate 7-phospho-2-dehydro-3-deoxy-D-arabino-heptonate. Residue K159 participates in NAD(+) binding. N160 contacts 7-phospho-2-dehydro-3-deoxy-D-arabino-heptonate. NAD(+)-binding positions include 177-180 and N188; that span reads FIDT. E192 contributes to the Zn(2+) binding site. Residues 192-195 and K246 contribute to the 7-phospho-2-dehydro-3-deoxy-D-arabino-heptonate site; that span reads EVIK. Catalysis depends on E256, which acts as the Proton acceptor; for 3-dehydroquinate synthase activity. Residues 260-264 and H267 each bind 7-phospho-2-dehydro-3-deoxy-D-arabino-heptonate; that span reads RNLLN. Residue H267 coordinates Zn(2+). Residue H271 is the Proton acceptor; for 3-dehydroquinate synthase activity of the active site. Residues H283 and K352 each coordinate 7-phospho-2-dehydro-3-deoxy-D-arabino-heptonate. H283 contributes to the Zn(2+) binding site. The interval 393–838 is EPSP synthase; the sequence is VIPGVPKDLN…WDALKQKFGV (446 aa). C820 serves as the catalytic For EPSP synthase activity. Positions 859-1051 are shikimate kinase; that stretch reads DASIVIIGMR…RRKRLSFFMS (193 aa). ATP is bound at residue 866 to 873; that stretch reads GMRGAGKT. Positions 1052 to 1273 are 3-dehydroquinase; it reads LTLTDLRDSG…AAPGQLSAAE (222 aa). Residue H1175 is the Proton acceptor; for 3-dehydroquinate dehydratase activity of the active site. K1203 serves as the catalytic Schiff-base intermediate with substrate; for 3-dehydroquinate dehydratase activity. Positions 1286–1573 are shikimate dehydrogenase; it reads AKKFAIFGKP…NAVLGTDETK (288 aa).

In the N-terminal section; belongs to the sugar phosphate cyclases superfamily. Dehydroquinate synthase family. The protein in the 2nd section; belongs to the EPSP synthase family. It in the 3rd section; belongs to the shikimate kinase family. This sequence in the 4th section; belongs to the type-I 3-dehydroquinase family. In the C-terminal section; belongs to the shikimate dehydrogenase family. As to quaternary structure, homodimer. Zn(2+) serves as cofactor.

The protein resides in the cytoplasm. It catalyses the reaction 7-phospho-2-dehydro-3-deoxy-D-arabino-heptonate = 3-dehydroquinate + phosphate. The catalysed reaction is 3-dehydroquinate = 3-dehydroshikimate + H2O. The enzyme catalyses shikimate + NADP(+) = 3-dehydroshikimate + NADPH + H(+). It carries out the reaction shikimate + ATP = 3-phosphoshikimate + ADP + H(+). It catalyses the reaction 3-phosphoshikimate + phosphoenolpyruvate = 5-O-(1-carboxyvinyl)-3-phosphoshikimate + phosphate. It participates in metabolic intermediate biosynthesis; chorismate biosynthesis; chorismate from D-erythrose 4-phosphate and phosphoenolpyruvate: step 2/7. The protein operates within metabolic intermediate biosynthesis; chorismate biosynthesis; chorismate from D-erythrose 4-phosphate and phosphoenolpyruvate: step 3/7. It functions in the pathway metabolic intermediate biosynthesis; chorismate biosynthesis; chorismate from D-erythrose 4-phosphate and phosphoenolpyruvate: step 4/7. Its pathway is metabolic intermediate biosynthesis; chorismate biosynthesis; chorismate from D-erythrose 4-phosphate and phosphoenolpyruvate: step 5/7. It participates in metabolic intermediate biosynthesis; chorismate biosynthesis; chorismate from D-erythrose 4-phosphate and phosphoenolpyruvate: step 6/7. Functionally, the AROM polypeptide catalyzes 5 consecutive enzymatic reactions in prechorismate polyaromatic amino acid biosynthesis. This is Pentafunctional AROM polypeptide 1 from Talaromyces marneffei (strain ATCC 18224 / CBS 334.59 / QM 7333) (Penicillium marneffei).